The sequence spans 235 residues: Thiopurine S-methyltransferase (235 aa).

S-adenosyl-L-methionine is bound by residues Trp13, Leu48, Glu69, and Arg126. The segment at 199-235 (PDPQNGAPRRVEHKVYQLTGKRPASPEADGRAAETED) is disordered. The span at 226–235 (ADGRAAETED) shows a compositional bias: basic and acidic residues.

The protein belongs to the class I-like SAM-binding methyltransferase superfamily. TPMT family.

The protein localises to the cytoplasm. It carries out the reaction S-adenosyl-L-methionine + a thiopurine = S-adenosyl-L-homocysteine + a thiopurine S-methylether.. The polypeptide is Thiopurine S-methyltransferase (Stutzerimonas stutzeri (strain A1501) (Pseudomonas stutzeri)).